Here is a 520-residue protein sequence, read N- to C-terminus: Protein-export membrane protein SecD (520 aa).

6 helical membrane passes run 10-30, 364-384, 391-411, 417-437, 461-481, and 483-503; these read IILL…PTLA, DSLL…FLRY, LPMI…AAGI, LSVI…LVII, FWVI…LAIL, and LGDL…GVLI.

Belongs to the SecD/SecF family. SecD subfamily. As to quaternary structure, part of the protein translocation apparatus. Forms a complex with SecF.

The protein resides in the cell membrane. In terms of biological role, involved in protein export. The chain is Protein-export membrane protein SecD from Haloquadratum walsbyi (strain DSM 16790 / HBSQ001).